A 727-amino-acid polypeptide reads, in one-letter code: MPSVSKAAAAALSGSPPQTEKPTHYRYLKEFRTEQCSLFLQHKCSQHRPFTCFHWHFLNQRRRRPLRRRDGTFNYSPDIYCSKYDEATGLCPDGDECPYLHRTTGDTERKYHLRYYKTGTCIHETDARGHCVKNGLHCAFAHGPLDLRPPVCDIRELQAQEALQNGQLSGGDGVPDLQPGVLASQAMIEKILGEDPRWQDSNFVLGSYKTEQCPKPPRLCRQGYACPHYHNSRDRRRNPRRFQYRSTPCPSVKHGDEWGEPSRCDGGDSCQYCHSRTEQQFHPEIYKSTKCNDMRQTGYCPRGPFCAFAHTEKSLAMVNEWSCRDLSSNSTSAYSSQPGSAKRKDSPSEGSQKATEDSKQNHLAVFSVAHPLAHSISSSVASSLASSTGSGSSSPTTLPTLPARALPLDPAGNTVGAVIGSALDLRLSDINIASLDKDLEEQDLGLTGPRSLAGSAPVTIPGSLPRSPSLHSSSSLSTSPLSSLSQSLSGPLVSSAMTPPQQPPPLRSEPATLGSAASSYSSLGLNGVPGSIWDFVSGSFSPSPSPILNSGPSASSSASPNSAELARVRRQLDEAKRKIRQWEESWQQVKQACDAWQREAQEAKERARVADSDRQLALQRKEEVEAKVKQLQEELEGLGLSSLPGLQSLGDISDIPLPKLHSLQSKLRLDLEAVDGVIFQLRAKQCVACQERAHGTVLRPCQHRVLCEPCAASTPECPYCKGQPLPW.

Positions methionine 1 to lysine 21 are disordered. 4 C3H1-type zinc fingers span residues tyrosine 75–threonine 104, tyrosine 115–leucine 145, glutamine 243–threonine 277, and isoleucine 285–lysine 313. Residues serine 330–glycine 339 are compositionally biased toward polar residues. 3 disordered regions span residues serine 330–glutamine 360, leucine 446–glycine 514, and serine 543–serine 562. The span at serine 463–serine 495 shows a compositional bias: low complexity. An RING-type zinc finger spans residues cysteine 686–lysine 721.

It belongs to the unkempt family. In terms of assembly, interacts with the GTP-bound form of Rac1. Interacts with Baf60b/Smarcd2. Post-translationally, ubiquitination is enhanced by activated Rac1. The presence of the RING finger domain is not essential for ubiquitination to occur. In terms of tissue distribution, ubiquitous.

It is found in the cytoplasm. The protein localises to the nucleus. It participates in protein modification; protein ubiquitination. Functionally, may participate in a protein complex showing an E3 ligase activity regulated by Rac1. Ubiquitination is directed towards itself and possibly other substrates, such as Baf60b/Smarcd2. Intrinsic E3 ligase activity has not been proven. The protein is Putative E3 ubiquitin-protein ligase UNKL (Unkl) of Mus musculus (Mouse).